The primary structure comprises 183 residues: Cyanate hydratase (183 aa).

Active-site residues include Arg-118, Glu-121, and Ser-144.

The protein belongs to the cyanase family.

It carries out the reaction cyanate + hydrogencarbonate + 3 H(+) = NH4(+) + 2 CO2. In terms of biological role, catalyzes the reaction of cyanate with bicarbonate to produce ammonia and carbon dioxide. The sequence is that of Cyanate hydratase from Cryptococcus neoformans var. neoformans serotype D (strain B-3501A) (Filobasidiella neoformans).